The following is a 343-amino-acid chain: Phenylalanine--tRNA ligase alpha subunit (343 aa).

Glu-256 provides a ligand contact to Mg(2+).

The protein belongs to the class-II aminoacyl-tRNA synthetase family. Phe-tRNA synthetase alpha subunit type 1 subfamily. Tetramer of two alpha and two beta subunits. Mg(2+) serves as cofactor.

It is found in the cytoplasm. It catalyses the reaction tRNA(Phe) + L-phenylalanine + ATP = L-phenylalanyl-tRNA(Phe) + AMP + diphosphate + H(+). This Prosthecochloris aestuarii (strain DSM 271 / SK 413) protein is Phenylalanine--tRNA ligase alpha subunit.